The primary structure comprises 290 residues: ATP synthase gamma chain (290 aa).

The protein belongs to the ATPase gamma chain family. In terms of assembly, F-type ATPases have 2 components, CF(1) - the catalytic core - and CF(0) - the membrane proton channel. CF(1) has five subunits: alpha(3), beta(3), gamma(1), delta(1), epsilon(1). CF(0) has three main subunits: a, b and c.

Its subcellular location is the cell inner membrane. In terms of biological role, produces ATP from ADP in the presence of a proton gradient across the membrane. The gamma chain is believed to be important in regulating ATPase activity and the flow of protons through the CF(0) complex. The protein is ATP synthase gamma chain of Bacteroides fragilis (strain YCH46).